The following is a 294-amino-acid chain: Survival motor neuron protein (294 aa).

Gly residues predominate over residues Met-1–Val-12. The disordered stretch occupies residues Met-1–Asp-32. The residue at position 2 (Ala-2) is an N-acetylalanine. Phosphoserine; by PKA is present on residues Ser-4, Ser-5, and Ser-8. The interval Pro-13–Asp-44 is P1 (binding site for GEMIN2). Thr-25 carries the phosphothreonine modification. Residues Ser-28 and Ser-31 each carry the phosphoserine modification. Lys-51 participates in a covalent cross-link: Glycyl lysine isopeptide (Lys-Gly) (interchain with G-Cter in SUMO2). Residues Asp-58–Pro-88 are disordered. Residues Thr-68–Lys-82 show a composition bias toward basic residues. The residue at position 69 (Thr-69) is a Phosphothreonine. Position 85 is a phosphothreonine; by PKA (Thr-85). Residues Gln-91 to Asn-151 enclose the Tudor domain. Residues Lys-97–Lys-209 form a required for interaction with RPP20/POP7 region. The segment covering Ala-156 to Ser-166 has biased composition (low complexity). Residues Ala-156–Pro-222 form a disordered region. Ser-187 is modified (phosphoserine; by PKA). The segment covering Leu-194 to Arg-204 has biased composition (pro residues). Residue Lys-209 forms a Glycyl lysine isopeptide (Lys-Gly) (interchain with G-Cter in SUMO2) linkage. Residues Pro-240–Trp-267 form a P2 (binding site for SM B) region. The required for interaction with SYNCRIP stretch occupies residues Gly-279–Asn-294.

Belongs to the SMN family. In terms of assembly, homooligomer; may form higher order homooligomers in the dimer to octamer range. Part of the core SMN complex that contains SMN1, GEMIN2/SIP1, DDX20/GEMIN3, GEMIN4, GEMIN5, GEMIN6, GEMIN7, GEMIN8 and STRAP/UNRIP. Part of the SMN-Sm complex that contains SMN1, GEMIN2/SIP1, DDX20/GEMIN3, GEMIN4, GEMIN5, GEMIN6, GEMIN7, GEMIN8, STRAP/UNRIP and the Sm proteins SNRPB, SNRPD1, SNRPD2, SNRPD3, SNRPE, SNRPF and SNRPG. Component of an import snRNP complex composed of KPNB1, RNUT1, SMN1 and ZNF259. Interacts with DDX20, FBL, NOLA1, RNUT1, SYNCRIP and with several spliceosomal snRNP core Sm proteins, including SNRPB, SNRPD1, SNRPD2, SNRPD3, SNRPE and ILF3. Interacts with GEMIN2; the interaction is direct. Interacts with GEMIN3; the interaction is direct. Interacts with GEMIN8; the interaction is direct. Interacts with SNRPB; the interaction is direct. Interacts (via Tudor domain) with SNRPD1 (via C-terminus); the interaction is direct. Interacts with SNRPD2; the interaction is direct. Interacts (via Tudor domain) with SNRPD3 (via C-terminus); the interaction is direct. Interacts with SNRPE; the interaction is direct. Interacts with OSTF1, LSM10, LSM11 and RPP20/POP7. Interacts (via C-terminal region) with ZPR1 (via C-terminal region). Interacts (via Tudor domain) with COIL. Interacts with SETX; recruits SETX to POLR2A. Interacts with POLR2A (via the C-terminal domain (CTD)). Interacts with PRMT5. Interacts with XRN2. Interacts (via C-terminus) with FMR1 (via C-terminus); the interaction is direct and occurs in a RNA-independent manner. Interacts (via Tudor domain) with SF3B2 ('Arg-508'-methylated form). Interacts with WRAP53/TCAB1. Interacts (via Tudor domain) with ELAVL4 in an RNA-independent manner; the interaction is required for localization of ELAVL4 to RNA granules. Interacts with FRG1.

The protein localises to the nucleus. Its subcellular location is the gem. The protein resides in the cajal body. It is found in the cytoplasm. It localises to the cytoplasmic granule. The protein localises to the perikaryon. Its subcellular location is the cell projection. The protein resides in the neuron projection. It is found in the axon. It localises to the myofibril. The protein localises to the sarcomere. Its subcellular location is the z line. Its function is as follows. The SMN complex catalyzes the assembly of small nuclear ribonucleoproteins (snRNPs), the building blocks of the spliceosome, and thereby plays an important role in the splicing of cellular pre-mRNAs. Most spliceosomal snRNPs contain a common set of Sm proteins SNRPB, SNRPD1, SNRPD2, SNRPD3, SNRPE, SNRPF and SNRPG that assemble in a heptameric protein ring on the Sm site of the small nuclear RNA to form the core snRNP (Sm core). In the cytosol, the Sm proteins SNRPD1, SNRPD2, SNRPE, SNRPF and SNRPG are trapped in an inactive 6S pICln-Sm complex by the chaperone CLNS1A that controls the assembly of the core snRNP. To assemble core snRNPs, the SMN complex accepts the trapped 5Sm proteins from CLNS1A forming an intermediate. Binding of snRNA inside 5Sm ultimately triggers eviction of the SMN complex, thereby allowing binding of SNRPD3 and SNRPB to complete assembly of the core snRNP. Within the SMN complex, SMN1 acts as a structural backbone and together with GEMIN2 it gathers the Sm complex subunits. Ensures the correct splicing of U12 intron-containing genes that may be important for normal motor and proprioceptive neurons development. Also required for resolving RNA-DNA hybrids created by RNA polymerase II, that form R-loop in transcription terminal regions, an important step in proper transcription termination. May also play a role in the metabolism of small nucleolar ribonucleoprotein (snoRNPs). The chain is Survival motor neuron protein (SMN1) from Macaca fascicularis (Crab-eating macaque).